The chain runs to 210 residues: Helix-loop-helix protein 26 (210 aa).

The span at 1 to 15 shows a compositional bias: low complexity; sequence MSSSPTSSSSGSPSS. The interval 1–33 is disordered; sequence MSSSPTSSSSGSPSSHGHRSETEKQRRDDTNDL. A bHLH domain is found at 14-65; it reads SSHGHRSETEKQRRDDTNDLLNEFKKIVQKSESEKLSKEEVLFRIVKLLSGI. A compositionally biased stretch (basic and acidic residues) spans 18–33; sequence HRSETEKQRRDDTNDL.

In terms of assembly, homodimer; binds to DNA as a homodimer. As to expression, expressed in intestinal cells (at protein level).

The protein resides in the nucleus. In terms of biological role, as a homodimer binds DNA via the E-box sequence 5'-CACGTG-3'. Represses lag-2 transcription during embryogenesis via Notch signaling, in an unc-37-dependent manner. Also represses tbx-37 independent of Notch signaling. In the intestine, plays a role in probiotic-mediated protection against infections by pathogens such as S.enterica. This is most likely by positively regulating the expression of genes such as bar-1 upon exposure to probiotic bacteria such as the E.faecium. This is Helix-loop-helix protein 26 from Caenorhabditis elegans.